Reading from the N-terminus, the 294-residue chain is N-acetylmuramic acid 6-phosphate etherase (294 aa).

In terms of domain architecture, SIS spans 54-217 (VIQSFEEEGR…STASMIGVGK (164 aa)). The Proton donor role is filled by Glu-82. Glu-113 is a catalytic residue.

The protein belongs to the GCKR-like family. MurNAc-6-P etherase subfamily. Homodimer.

The enzyme catalyses N-acetyl-D-muramate 6-phosphate + H2O = N-acetyl-D-glucosamine 6-phosphate + (R)-lactate. Its pathway is amino-sugar metabolism; N-acetylmuramate degradation. Functionally, specifically catalyzes the cleavage of the D-lactyl ether substituent of MurNAc 6-phosphate, producing GlcNAc 6-phosphate and D-lactate. In Bacillus cereus (strain ZK / E33L), this protein is N-acetylmuramic acid 6-phosphate etherase.